Here is a 340-residue protein sequence, read N- to C-terminus: Ketol-acid reductoisomerase (NADP(+)) (340 aa).

Positions 1-182 (MRVYYDRDCD…GGGRSGIIET (182 aa)) constitute a KARI N-terminal Rossmann domain. Residues 24 to 27 (YGSQ), arginine 48, serine 51, serine 53, and 83 to 86 (DELQ) contribute to the NADP(+) site. Residue histidine 108 is part of the active site. Glycine 134 is an NADP(+) binding site. Positions 183–329 (NFRQECETDL…EKLRGMMPWI (147 aa)) constitute a KARI C-terminal knotted domain. 4 residues coordinate Mg(2+): aspartate 191, glutamate 195, glutamate 227, and glutamate 231. Position 252 (serine 252) interacts with substrate.

Belongs to the ketol-acid reductoisomerase family. Mg(2+) is required as a cofactor.

The enzyme catalyses (2R)-2,3-dihydroxy-3-methylbutanoate + NADP(+) = (2S)-2-acetolactate + NADPH + H(+). It carries out the reaction (2R,3R)-2,3-dihydroxy-3-methylpentanoate + NADP(+) = (S)-2-ethyl-2-hydroxy-3-oxobutanoate + NADPH + H(+). The protein operates within amino-acid biosynthesis; L-isoleucine biosynthesis; L-isoleucine from 2-oxobutanoate: step 2/4. It participates in amino-acid biosynthesis; L-valine biosynthesis; L-valine from pyruvate: step 2/4. Functionally, involved in the biosynthesis of branched-chain amino acids (BCAA). Catalyzes an alkyl-migration followed by a ketol-acid reduction of (S)-2-acetolactate (S2AL) to yield (R)-2,3-dihydroxy-isovalerate. In the isomerase reaction, S2AL is rearranged via a Mg-dependent methyl migration to produce 3-hydroxy-3-methyl-2-ketobutyrate (HMKB). In the reductase reaction, this 2-ketoacid undergoes a metal-dependent reduction by NADPH to yield (R)-2,3-dihydroxy-isovalerate. In Cereibacter sphaeroides (strain ATCC 17023 / DSM 158 / JCM 6121 / CCUG 31486 / LMG 2827 / NBRC 12203 / NCIMB 8253 / ATH 2.4.1.) (Rhodobacter sphaeroides), this protein is Ketol-acid reductoisomerase (NADP(+)).